The following is a 415-amino-acid chain: ATP-dependent Clp protease ATP-binding subunit ClpX (415 aa).

One can recognise a ClpX-type ZB domain in the interval 1–52 (MAESKNNKKRCSFCGRSENEVGFLITGMNGYICDSCATQAYEITQEAMGAGK). Residues C11, C14, C33, and C36 each contribute to the Zn(2+) site. 121–128 (STGTGKTL) contacts ATP.

The protein belongs to the ClpX chaperone family. Component of the ClpX-ClpP complex. Forms a hexameric ring that, in the presence of ATP, binds to fourteen ClpP subunits assembled into a disk-like structure with a central cavity, resembling the structure of eukaryotic proteasomes.

Its function is as follows. ATP-dependent specificity component of the Clp protease. It directs the protease to specific substrates. Can perform chaperone functions in the absence of ClpP. This Bacteroides fragilis (strain ATCC 25285 / DSM 2151 / CCUG 4856 / JCM 11019 / LMG 10263 / NCTC 9343 / Onslow / VPI 2553 / EN-2) protein is ATP-dependent Clp protease ATP-binding subunit ClpX.